A 623-amino-acid polypeptide reads, in one-letter code: Protein EDS1L (623 aa).

Position 2 is an N-acetylalanine (A2). S123 (nucleophile) is an active-site residue. Catalysis depends on charge relay system residues D187 and H317.

In terms of assembly, homodimer. Interacts with RPS4, RPS6, SNC1, SRFR1, AvrRps4 and HopA1. Interacts with PAD4 (via N-terminus). Interacts with SAG101. EDS1-SAG101 and EDS1-PAD4 form separate complexes in pathogen-unchallenged cells.

It is found in the nucleus. The protein localises to the cytoplasm. Its subcellular location is the microsome. Positive regulator of basal resistance and of effector-triggered immunity specifically mediated by TIR-NB-LRR resistance proteins. Disruption by bacterial effector of EDS1-TIR-NB-LRR resistance protein interactions constitutes the first step in resistance activation. Triggers early plant defenses and hypersensitive response independently of PAD4, and then recruits PAD4 to potentiate plant defenses through the accumulation of salicylic acid. Nuclear localization is essential for basal and TIR-NB-LRR-conditioned immunity and for reprogramming defense gene expression, while cytoplasmic EDS1 is required to induce a complete immune response. Heterodimerization with PAD4 or SGA101 is necessary for TNL-mediated effector-triggered immunity. Contributes to nonhost resistance against E.amylovora. Has no direct lipase activity. This chain is Protein EDS1L, found in Arabidopsis thaliana (Mouse-ear cress).